The following is a 95-amino-acid chain: Aspartyl/glutamyl-tRNA(Asn/Gln) amidotransferase subunit C (95 aa).

This sequence belongs to the GatC family. Heterotrimer of A, B and C subunits.

It catalyses the reaction L-glutamyl-tRNA(Gln) + L-glutamine + ATP + H2O = L-glutaminyl-tRNA(Gln) + L-glutamate + ADP + phosphate + H(+). The catalysed reaction is L-aspartyl-tRNA(Asn) + L-glutamine + ATP + H2O = L-asparaginyl-tRNA(Asn) + L-glutamate + ADP + phosphate + 2 H(+). In terms of biological role, allows the formation of correctly charged Asn-tRNA(Asn) or Gln-tRNA(Gln) through the transamidation of misacylated Asp-tRNA(Asn) or Glu-tRNA(Gln) in organisms which lack either or both of asparaginyl-tRNA or glutaminyl-tRNA synthetases. The reaction takes place in the presence of glutamine and ATP through an activated phospho-Asp-tRNA(Asn) or phospho-Glu-tRNA(Gln). This is Aspartyl/glutamyl-tRNA(Asn/Gln) amidotransferase subunit C from Thermoanaerobacter pseudethanolicus (strain ATCC 33223 / 39E) (Clostridium thermohydrosulfuricum).